We begin with the raw amino-acid sequence, 308 residues long: Mitochondrial import receptor subunit TOM40B (308 aa).

The disordered stretch occupies residues 1 to 29 (MGNTLGLAPMGALPRRSPRREEPLPNPGS). Residues 281 to 308 (PLPVTLALGAFLNHWRNRFHCGFSITVG) form a required for mitochondrial targeting region.

This sequence belongs to the Tom40 family. Forms part of the preprotein translocase of the outer mitochondrial membrane (TOM complex) containing TOMM22, TOMM40, TOMM40L and TOMM70. Interacts with mitochondrial targeting sequences.

It localises to the mitochondrion outer membrane. Functionally, potential channel-forming protein implicated in import of protein precursors into mitochondria. The sequence is that of Mitochondrial import receptor subunit TOM40B from Bos taurus (Bovine).